The primary structure comprises 166 residues: MTESTSRRPAYARLLDRAVHILAVRDHSEQELRRKLAAPIMGKNGPEEIDATAEDYERVIAWCHEHGYLDDSRFVARFIASRSRKGYGPARIRQELNQKGISREATEKAMRECDIDWCALARDQATRKYGEPLPTVFSEKVKIQRFLLYRGYLMEDIQDIWRNFAD.

Belongs to the RecX family.

It is found in the cytoplasm. Its function is as follows. Modulates RecA activity. This Shigella boydii serotype 18 (strain CDC 3083-94 / BS512) protein is Regulatory protein RecX.